We begin with the raw amino-acid sequence, 238 residues long: MGKRLIVQRRGKGSPLYRSRPWLHPAPARYPPLTPVTLRGRVVELVHDPGRWVPLAHIVLENGDEFYIPAAEGMYVGQIIEIGPDARPVNGNILPVGKIPEGTQVYNIEIRPGDGGKLVRAYGTYAIILGRSGNKTIIQLPSGKVKEVPNDARATIGIVAGAGRLEKPLLKAGAAYYKWSAKPHVWPRVRGVAMNAVNHPHGGGSHQSPSFPTTVSRNAPPGRKVGHIAARSTGRRKR.

The interval 198–238 (NHPHGGGSHQSPSFPTTVSRNAPPGRKVGHIAARSTGRRKR) is disordered. Residues 206 to 217 (HQSPSFPTTVSR) show a composition bias toward polar residues.

Belongs to the universal ribosomal protein uL2 family. Part of the 50S ribosomal subunit. Forms a bridge to the 30S subunit in the 70S ribosome.

Functionally, one of the primary rRNA binding proteins. Required for association of the 30S and 50S subunits to form the 70S ribosome, for tRNA binding and peptide bond formation. It has been suggested to have peptidyltransferase activity; this is somewhat controversial. Makes several contacts with the 16S rRNA in the 70S ribosome. In Hyperthermus butylicus (strain DSM 5456 / JCM 9403 / PLM1-5), this protein is Large ribosomal subunit protein uL2.